The following is a 232-amino-acid chain: Phosphatidylserine decarboxylase proenzyme (232 aa).

The active-site Schiff-base intermediate with substrate; via pyruvic acid is the S190. Pyruvic acid (Ser); by autocatalysis is present on S190.

This sequence belongs to the phosphatidylserine decarboxylase family. PSD-A subfamily. Heterodimer of a large membrane-associated beta subunit and a small pyruvoyl-containing alpha subunit. Pyruvate is required as a cofactor. In terms of processing, is synthesized initially as an inactive proenzyme. Formation of the active enzyme involves a self-maturation process in which the active site pyruvoyl group is generated from an internal serine residue via an autocatalytic post-translational modification. Two non-identical subunits are generated from the proenzyme in this reaction, and the pyruvate is formed at the N-terminus of the alpha chain, which is derived from the carboxyl end of the proenzyme. The post-translation cleavage follows an unusual pathway, termed non-hydrolytic serinolysis, in which the side chain hydroxyl group of the serine supplies its oxygen atom to form the C-terminus of the beta chain, while the remainder of the serine residue undergoes an oxidative deamination to produce ammonia and the pyruvoyl prosthetic group on the alpha chain.

It is found in the cell membrane. The enzyme catalyses a 1,2-diacyl-sn-glycero-3-phospho-L-serine + H(+) = a 1,2-diacyl-sn-glycero-3-phosphoethanolamine + CO2. The protein operates within phospholipid metabolism; phosphatidylethanolamine biosynthesis; phosphatidylethanolamine from CDP-diacylglycerol: step 2/2. In terms of biological role, catalyzes the formation of phosphatidylethanolamine (PtdEtn) from phosphatidylserine (PtdSer). This Rhizobium rhizogenes (strain K84 / ATCC BAA-868) (Agrobacterium radiobacter) protein is Phosphatidylserine decarboxylase proenzyme.